The chain runs to 159 residues: Neuroglobin (159 aa).

Positions 3–151 (KLSSKDKELI…VVASMSRGWA (149 aa)) constitute a Globin domain. His-66 and His-98 together coordinate heme b.

It belongs to the globin family. Monomer. Homodimers and homotetramers. Mainly monomeric but also detected as part of homodimers and homotetramers.

Its subcellular location is the cytoplasm. It localises to the cytosol. The protein resides in the mitochondrion matrix. The catalysed reaction is Fe(III)-heme b-[protein] + nitric oxide + H2O = Fe(II)-heme b-[protein] + nitrite + 2 H(+). In terms of biological role, monomeric globin with a bis-histidyl six-coordinate heme-iron atom through which it can bind dioxygen, carbon monoxide and nitric oxide. Could help transport oxygen and increase its availability to the metabolically active neuronal tissues, though its low quantity in tissues as well as its high affinity for dioxygen, which may limit its oxygen-releasing ability, argue against it. The ferrous/deoxygenated form exhibits a nitrite reductase activity and it could produce nitric oxide which in turn inhibits cellular respiration in response to hypoxia. In its ferrous/deoxygenated state, it may also exhibit GDI (Guanine nucleotide Dissociation Inhibitor) activity toward heterotrimeric G-alpha proteins, thereby regulating signal transduction to facilitate neuroprotective responses in the wake of hypoxia and associated oxidative stress. In Tetraodon nigroviridis (Spotted green pufferfish), this protein is Neuroglobin (ngb).